The sequence spans 229 residues: Ribonuclease 3 (229 aa).

The RNase III domain occupies 7 to 132; it reads ISAFCDRIGH…VIAAVYRDAG (126 aa). Glutamate 45 lines the Mg(2+) pocket. Residue aspartate 49 is part of the active site. Mg(2+) contacts are provided by aspartate 118 and glutamate 121. The active site involves glutamate 121. Residues 157–226 enclose the DRBM domain; sequence DPKTALQEWA…AKALLAQVES (70 aa).

This sequence belongs to the ribonuclease III family. Homodimer. The cofactor is Mg(2+).

It localises to the cytoplasm. The catalysed reaction is Endonucleolytic cleavage to 5'-phosphomonoester.. Digests double-stranded RNA. Involved in the processing of primary rRNA transcript to yield the immediate precursors to the large and small rRNAs (23S and 16S). Processes some mRNAs, and tRNAs when they are encoded in the rRNA operon. Processes pre-crRNA and tracrRNA of type II CRISPR loci if present in the organism. The protein is Ribonuclease 3 of Dinoroseobacter shibae (strain DSM 16493 / NCIMB 14021 / DFL 12).